The primary structure comprises 158 residues: Large ribosomal subunit protein eL24 (158 aa).

The segment covering 98–146 has biased composition (basic and acidic residues); it reads LDASHKKAEAEKAVRELKQKKANDIEKKRADRKLQGKDVKAAKKAETKK. The interval 98–158 is disordered; that stretch reads LDASHKKAEA…QPVGAKGGKK (61 aa).

The protein belongs to the eukaryotic ribosomal protein eL24 family.

The protein is Large ribosomal subunit protein eL24 (RPL24) of Tetrahymena thermophila (strain SB210).